Here is a 280-residue protein sequence, read N- to C-terminus: Energy-coupling factor transporter ATP-binding protein EcfA2 (280 aa).

Residues 3 to 245 (INLQNVSYTY…VSLLEKKQLG (243 aa)) form the ABC transporter domain. 40-47 (GHTGSGKS) lines the ATP pocket.

It belongs to the ABC transporter superfamily. Energy-coupling factor EcfA family. In terms of assembly, forms a stable energy-coupling factor (ECF) transporter complex composed of 2 membrane-embedded substrate-binding proteins (S component), 2 ATP-binding proteins (A component) and 2 transmembrane proteins (T component).

Its subcellular location is the cell membrane. ATP-binding (A) component of a common energy-coupling factor (ECF) ABC-transporter complex. Unlike classic ABC transporters this ECF transporter provides the energy necessary to transport a number of different substrates. This is Energy-coupling factor transporter ATP-binding protein EcfA2 from Streptococcus pyogenes serotype M3 (strain ATCC BAA-595 / MGAS315).